Reading from the N-terminus, the 842-residue chain is Leucine--tRNA ligase (842 aa).

The 'HIGH' region motif lies at 44 to 55 (PYPSANGLHVGH). The 'KMSKS' region motif lies at 619–623 (KMSKS). Lys622 lines the ATP pocket.

It belongs to the class-I aminoacyl-tRNA synthetase family.

The protein resides in the cytoplasm. It carries out the reaction tRNA(Leu) + L-leucine + ATP = L-leucyl-tRNA(Leu) + AMP + diphosphate. The polypeptide is Leucine--tRNA ligase (Borrelia recurrentis (strain A1)).